A 504-amino-acid chain; its full sequence is Peptidyl-prolyl cis-trans isomerase-like 4 (504 aa).

Positions 1-169 constitute a PPIase cyclophilin-type domain; the sequence is MSVMLETSLG…QNIRIRHVEI (169 aa). In terms of domain architecture, RRM spans 246–324; the sequence is NILFVCKLNP…RRIWVDFSQS (79 aa). Over residues 330–339 the composition is skewed to polar residues; that stretch reads RSMLSSSNPT. The disordered stretch occupies residues 330 to 504; that stretch reads RSMLSSSNPT…RERDDRDRRR (175 aa). The segment covering 340 to 354 has biased composition (gly residues); it reads GRGGRGGRGGRGGNY. Composition is skewed to basic and acidic residues over residues 356–381 and 416–504; these read GRRDGDRDRDRDSGWSSRRDAPDSRR and SKRD…DRRR.

The protein belongs to the cyclophilin-type PPIase family. PPIL4 subfamily.

The protein localises to the nucleus. It catalyses the reaction [protein]-peptidylproline (omega=180) = [protein]-peptidylproline (omega=0). Its function is as follows. PPIases accelerate the folding of proteins. It catalyzes the cis-trans isomerization of proline imidic peptide bonds in oligopeptides. The protein is Peptidyl-prolyl cis-trans isomerase-like 4 (CYP6) of Cryptococcus neoformans var. neoformans serotype D (strain B-3501A) (Filobasidiella neoformans).